Consider the following 153-residue polypeptide: MCNSVRTALAASNCCSIVLCCVLLLTLTLTVAVTAQHNQADETCETLPSEIHLIKEEYDELGRLYRTCNGDVTVNKCEGKCNSQVQPSVITATGFLKECYCCRESFLRERQLQLTHCYDPDGVRMTDHESATMEIRLKEPVDCKCFKCGEMVR.

Positions methionine 1–alanine 35 are cleaved as a signal peptide. 5 cysteine pairs are disulfide-bonded: cysteine 44–cysteine 102, cysteine 68–cysteine 117, cysteine 77–cysteine 143, cysteine 81–cysteine 145, and cysteine 99–cysteine 148. Residues cysteine 44–glutamate 139 enclose the CTCK domain.

As to quaternary structure, heterodimer of burs and pburs.

The protein resides in the secreted. Final heterodimeric neurohormone released at the end of the molting cycle, involved in the sclerotization (tanning) of the insect cuticle, melanization and wing spreading. The sequence is that of Partner of bursicon from Anopheles gambiae (African malaria mosquito).